A 476-amino-acid chain; its full sequence is Probable flippase AglR (476 aa).

The next 14 membrane-spanning stretches (helical) occupy residues 7-29, 34-56, 83-103, 112-132, 146-166, 168-188, 222-242, 246-266, 287-307, 310-330, 354-373, 377-396, 409-429, and 439-459; these read ASALQFGANVTQTFVGAIITIYV, GVGAFGIFALSAALVKWASIPAV, VLTGAIILVGLLALLGYSPFV, TQLVGGMFVSNVSFRLVLGGL, ALWGILSSLVKLALVYTGVGV, ALFYGEITSSIVIGIFGVYSL, WLDTIILGFFVSTSLVGIYEV, ISALFVLLPTAISKSTFPTIS, VAGVLAIPGLVGSVLVGGDIL, YGPSVSSVGVAVSVLVSLSVV, FRIGVIFITTNIILNVSLIP, VIGAAIATLLSMTLGSILAV, VSAIGSQFVSAGAMAVVLFTI, and IEVVLYVLAGATTYGFVLLSL.

This sequence belongs to the AglR/Agl15 family.

It is found in the cell membrane. Its pathway is cell surface structure biogenesis; S-layer biogenesis. Involved in the assembly of a N-linked pentasaccharide that decorates the S-layer glycoprotein and flagellins. Probably mediates or contributes to the translocation of the dolichol-phosphate-mannose across the membrane. This Haloferax volcanii (strain ATCC 29605 / DSM 3757 / JCM 8879 / NBRC 14742 / NCIMB 2012 / VKM B-1768 / DS2) (Halobacterium volcanii) protein is Probable flippase AglR (aglR).